We begin with the raw amino-acid sequence, 317 residues long: Inositol oxygenase 4 (317 aa).

Residues arginine 58 and 115–117 contribute to the substrate site; that span reads DES. Positions 128, 153, and 154 each coordinate Fe cation. Residues lysine 157 and 174–175 each bind substrate; that span reads GD. Residues histidine 226, histidine 252, and aspartate 285 each coordinate Fe cation. 252 to 253 contributes to the substrate binding site; sequence HS.

The protein belongs to the myo-inositol oxygenase family. Fe cation serves as cofactor. In terms of tissue distribution, expressed in flowers, leaves, siliques, and to a lesser extent in roots.

The protein resides in the cytoplasm. The catalysed reaction is myo-inositol + O2 = D-glucuronate + H2O + H(+). Its pathway is polyol metabolism; myo-inositol degradation into D-glucuronate; D-glucuronate from myo-inositol: step 1/1. Functionally, catalyzes the oxygenative cleavage of myo-inositol to D-glucuronate. Involved in the biosynthesis of UDP-glucuronic acid (UDP-GlcA), providing nucleotide sugars for cell-wall polymers. May be also involved in plant ascorbate biosynthesis. This chain is Inositol oxygenase 4 (MIOX4), found in Arabidopsis thaliana (Mouse-ear cress).